Consider the following 150-residue polypeptide: Transthyretin (150 aa).

The signal sequence occupies residues 1–20 (MGSSSLLLVCLAGMVYLTEA). Residue Cys-33 is modified to Sulfocysteine. Residues Lys-38, Glu-77, and Ser-140 each contribute to the L-thyroxine site.

It belongs to the transthyretin family. As to quaternary structure, homotetramer. Dimer of dimers. In the homotetramer, subunits assemble around a central channel that can accommodate two ligand molecules. Interacts with RBP4. Post-translationally, sulfonation of the reactive cysteine Cys-33 enhances the stability of the native conformation of TTR, avoiding misassembly of the protein leading to amyloid formation. As to expression, detected in choroid plexus (at protein level). Detected in choroid plexus.

The protein localises to the secreted. In terms of biological role, thyroid hormone-binding protein. Probably transports thyroxine from the bloodstream to the brain. The chain is Transthyretin (TTR) from Tiliqua rugosa (Shingleback lizard).